The sequence spans 500 residues: Monocarboxylate transporter 1 (500 aa).

At 1–22 (MPPAVGGPVGYTPPDGGWGWAV) the chain is on the cytoplasmic side. Residues 23–44 (VIGAFISIGFSYAFPKSITVFF) form a helical membrane-spanning segment. A (S)-lactate-binding site is contributed by Lys38. Residues 45–55 (KEIEGIFHATT) are Extracellular-facing. Residues 56-80 (SEVSWISSIMLAVMYGGGPISSILV) form a helical membrane-spanning segment. Residues 81-84 (NKYG) lie on the Cytoplasmic side of the membrane. A helical membrane pass occupies residues 85–105 (SRIVMIVGGCLSGCGLIAASF). The Extracellular segment spans residues 106–109 (CNTV). Residues 110 to 132 (QQLYVCIGVIGGLGLAFNLNPAL) traverse the membrane as a helical segment. Residues 133–146 (TMIGKYFYKRRPLA) lie on the Cytoplasmic side of the membrane. The helical transmembrane segment at 147 to 169 (NGLAMAGSPVFLCTLAPLNQVFF) threads the bilayer. The Extracellular segment spans residues 170–174 (GIFGW). Residues 175–194 (RGSFLILGGLLLNCCVAGAL) traverse the membrane as a helical segment. Over 195 to 261 (MRPIGPKPTK…FLDLTLFTHR (67 aa)) the chain is Cytoplasmic. Ser210 and Ser213 each carry phosphoserine. Thr231 is subject to Phosphothreonine. The chain crosses the membrane as a helical span at residues 262 to 288 (GFLLYLSGNVIMFFGLFAPLVFLSSYG). Over 289–295 (KSQHYSS) the chain is Extracellular. A helical transmembrane segment spans residues 296-317 (EKSAFLLSILAFVDMVARPSMG). Residue Asp309 coordinates H(+). Residue Arg313 participates in (S)-lactate binding. Topologically, residues 318–328 (LVANTKPIRPR) are cytoplasmic. A helical membrane pass occupies residues 329-349 (IQYFFAASVVANGVCHMLAPL). At 350 to 353 (STTY) the chain is on the extracellular side. Residues 354 to 375 (VGFCVYAGFFGFAFGWLSSVLF) form a helical membrane-spanning segment. Residues 376-389 (ETLMDLVGPQRFSS) lie on the Cytoplasmic side of the membrane. Residues 390-410 (AVGLVTIVECCPVLLGPPLLG) traverse the membrane as a helical segment. Over 411–421 (RLNDMYGDYKY) the chain is Extracellular. A helical membrane pass occupies residues 422-443 (TYWACGVVLIISGIYLFIGMGI). The Cytoplasmic portion of the chain corresponds to 444–500 (NYRLLAKEQKANEQKKESKEEETSIDVAGKPNEVTKAAESPDQKDTDGGPKEEESPV). Residues 454–465 (ANEQKKESKEEE) show a composition bias toward basic and acidic residues. The tract at residues 454–500 (ANEQKKESKEEETSIDVAGKPNEVTKAAESPDQKDTDGGPKEEESPV) is disordered. Residue Ser461 is modified to Phosphoserine. Thr466 carries the post-translational modification Phosphothreonine. Phosphoserine is present on residues Ser467, Ser483, and Ser498. A compositionally biased stretch (basic and acidic residues) spans 482 to 500 (ESPDQKDTDGGPKEEESPV).

The protein belongs to the major facilitator superfamily. Monocarboxylate porter (TC 2.A.1.13) family. In terms of assembly, interacts with EMB; interaction mediates SLC16A1 targeting to the plasma membrane. Interacts with isoform 2 of BSG; interaction mediates SLC16A1 targeting to the plasma membrane. In terms of tissue distribution, widely expressed. Detected in heart and in blood lymphocytes and monocytes (at protein level).

It localises to the cell membrane. It is found in the basolateral cell membrane. Its subcellular location is the apical cell membrane. It carries out the reaction (S)-lactate(in) + H(+)(in) = (S)-lactate(out) + H(+)(out). It catalyses the reaction acetate(out) + H(+)(out) = acetate(in) + H(+)(in). The catalysed reaction is acetoacetate(out) + H(+)(out) = acetoacetate(in) + H(+)(in). The enzyme catalyses pyruvate(out) + H(+)(out) = pyruvate(in) + H(+)(in). It carries out the reaction (R)-3-hydroxybutanoate(out) + H(+)(out) = (R)-3-hydroxybutanoate(in) + H(+)(in). It catalyses the reaction 3-methyl-2-oxobutanoate(out) + H(+)(out) = 3-methyl-2-oxobutanoate(in) + H(+)(in). The catalysed reaction is 4-methyl-2-oxopentanoate(out) + H(+)(out) = 4-methyl-2-oxopentanoate(in) + H(+)(in). The enzyme catalyses succinate(in) + 2 H(+)(in) = succinate(out) + 2 H(+)(out). Its activity is regulated as follows. Selectively inhibited by AZD3965, that acts as a competitive inhibitor binding to the central channel in the outward open conformation. Its function is as follows. Bidirectional proton-coupled monocarboxylate transporter. Catalyzes the rapid transport across the plasma membrane of many monocarboxylates such as lactate, pyruvate, acetate and the ketone bodies acetoacetate and beta-hydroxybutyrate, and thus contributes to the maintenance of intracellular pH. The transport direction is determined by the proton motive force and the concentration gradient of the substrate monocarboxylate. MCT1 is a major lactate exporter. Plays a role in cellular responses to a high-fat diet by modulating the cellular levels of lactate and pyruvate that contribute to the regulation of central metabolic pathways and insulin secretion, with concomitant effects on plasma insulin levels and blood glucose homeostasis. Facilitates the protonated monocarboxylate form of succinate export, that its transient protonation upon muscle cell acidification in exercising muscle and ischemic heart. Functions via alternate outward- and inward-open conformation states. Protonation and deprotonation of 309-Asp is essential for the conformational transition. The chain is Monocarboxylate transporter 1 from Homo sapiens (Human).